The primary structure comprises 127 residues: MSVTTWNLNGTKHHVLICNGSSCMRKGGEEATQAIRNKVAELNLDEAVHTTRTCNGRCKDAPVAIVYPSGDWYKQVTEKVAHRIVEEHLAGGCSLKESLIYEYDQKGFVSPENSDSIEGIDKVKSNA.

Positions 23, 54, and 58 each coordinate [2Fe-2S] cluster.

This sequence belongs to the 2Fe2S Shethna-type ferredoxin family. [2Fe-2S] cluster serves as cofactor.

In terms of biological role, ferredoxins are iron-sulfur proteins that transfer electrons in a wide variety of metabolic reactions. In Priestia megaterium (Bacillus megaterium), this protein is Putative 2Fe-2S ferredoxin (cbiW).